A 1257-amino-acid polypeptide reads, in one-letter code: Protein flightless-1 homolog (1257 aa).

LRR repeat units follow at residues 6 to 31 (LQFVKGIDFSGNDFSGDRFPHDVEQM), 32 to 54 (TQMTWLKLNDSKLEQVPDELSRC), 56 to 77 (NLEHLQMAHNQLISVHGELSDL), 78 to 102 (PRLRSVIVRDNNLKTAGIPTDIFRM), 103 to 126 (KDLTIIDLSRNQLREVPTNLEYAK), 128 to 148 (SIVLNLSYNNIETIPNSVCAN), 149 to 172 (LIDLLFLDLSNNKLDMLPPQIRRL), 174 to 195 (MLQSLKLSNNPLNHFQLKQLPS), 197 to 221 (TSLSVLHMSNTNRTLDNIPPTLDDM), 222 to 244 (HNLRDVDFSENNLPIVPEALFKL), 246 to 267 (NLRKLNLSGNKIEKLNMTEGEW), 268 to 290 (ENLETLNMSHNQLTVLPDCVVKL), 292 to 315 (RLTKLYAANNQLTFEGIPSGIGKL), 316 to 338 (IQLTVLHLSYNKLELVPEGISRC), 339 to 361 (VKLQKLKLDHNRLITLPEGIHLL), and 363 to 384 (DLKVLDLHENENLVMPPKPNDA). 4 Gelsolin-like repeats span residues 523 to 600 (MDEA…EEFL), 640 to 714 (AVEM…PEFW), 759 to 832 (ELPK…MMFR), and 1168 to 1243 (EKTV…CRFR).

It belongs to the villin/gelsolin family.

Its function is as follows. May play a key role in embryonic cellularization by interacting with both the cytoskeleton and other cellular components. The sequence is that of Protein flightless-1 homolog (fli-1) from Caenorhabditis elegans.